A 20-amino-acid chain; its full sequence is Pommaclein (20 aa).

It belongs to the GASA family. Expressed in pulp (aril) of fruits (at protein level).

The sequence is that of Pommaclein from Punica granatum (Pomegranate).